A 208-amino-acid chain; its full sequence is Uracil phosphoribosyltransferase (208 aa).

Residues Arg78, Arg103, and 130–138 (DPMLATGGS) contribute to the 5-phospho-alpha-D-ribose 1-diphosphate site. Uracil-binding positions include Ile193 and 198–200 (GDA). Residue Asp199 participates in 5-phospho-alpha-D-ribose 1-diphosphate binding.

The protein belongs to the UPRTase family. It depends on Mg(2+) as a cofactor.

It catalyses the reaction UMP + diphosphate = 5-phospho-alpha-D-ribose 1-diphosphate + uracil. It participates in pyrimidine metabolism; UMP biosynthesis via salvage pathway; UMP from uracil: step 1/1. Its activity is regulated as follows. Allosterically activated by GTP. Catalyzes the conversion of uracil and 5-phospho-alpha-D-ribose 1-diphosphate (PRPP) to UMP and diphosphate. This chain is Uracil phosphoribosyltransferase, found in Shewanella sediminis (strain HAW-EB3).